We begin with the raw amino-acid sequence, 207 residues long: Outer-membrane lipoprotein carrier protein (207 aa).

The N-terminal stretch at 1 to 21 (MRAIRMLLVSALAMGAVSAHA) is a signal peptide.

Belongs to the LolA family. Monomer.

It is found in the periplasm. Its function is as follows. Participates in the translocation of lipoproteins from the inner membrane to the outer membrane. Only forms a complex with a lipoprotein if the residue after the N-terminal Cys is not an aspartate (The Asp acts as a targeting signal to indicate that the lipoprotein should stay in the inner membrane). In Pseudomonas entomophila (strain L48), this protein is Outer-membrane lipoprotein carrier protein.